A 164-amino-acid chain; its full sequence is Endoribonuclease YbeY (164 aa).

Zn(2+) is bound by residues H111, H115, and H121. A disordered region spans residues 140-164 (ELGHPDPYADDDAQKHSTVTIKDSE). Positions 155 to 164 (HSTVTIKDSE) are enriched in polar residues.

The protein belongs to the endoribonuclease YbeY family. Zn(2+) is required as a cofactor.

The protein localises to the cytoplasm. Functionally, single strand-specific metallo-endoribonuclease involved in late-stage 70S ribosome quality control and in maturation of the 3' terminus of the 16S rRNA. The chain is Endoribonuclease YbeY from Pseudomonas fluorescens (strain SBW25).